A 98-amino-acid chain; its full sequence is Feather keratin 4 (98 aa).

An N-acetylserine modification is found at Ser-2.

This sequence belongs to the avian keratin family. In terms of assembly, the avian keratins (F-ker, S-ker, C-ker and B-ker) are a complex mixture of very similar polypeptides.

The chain is Feather keratin 4 from Gallus gallus (Chicken).